Consider the following 423-residue polypeptide: Alpha-1-antichymotrypsin (423 aa).

Positions 1–23 (MERMLPLLALGLLAAGFCPAVLC) are cleaved as a signal peptide. Residues N33, N93, N106, N127, and N186 are each glycosylated (N-linked (GlcNAc...) asparagine). Residues 235 to 237 (KKK) mediate DNA binding. N-linked (GlcNAc...) asparagine glycosylation is present at N271. Residues 369-394 (GTEASAATAVKITLLSALVETRTIVR) are RCL. Residues 381–389 (TLLSALVET) are O-glycosylated at one site.

Belongs to the serpin family. Interacts with DNAJC1. N- and O-glycosylated. In terms of tissue distribution, plasma. Synthesized in the liver. Like the related alpha-1-antitrypsin, its concentration increases in the acute phase of inflammation or infection. Found in the amyloid plaques from the hippocampus of Alzheimer disease brains.

It localises to the secreted. Its function is as follows. Although its physiological function is unclear, it can inhibit neutrophil cathepsin G and mast cell chymase, both of which can convert angiotensin-1 to the active angiotensin-2. This Homo sapiens (Human) protein is Alpha-1-antichymotrypsin (SERPINA3).